Here is a 358-residue protein sequence, read N- to C-terminus: Arginine kinase (358 aa).

A Phosphagen kinase N-terminal domain is found at 6 to 88; that stretch reads SVEELWAKLD…LDAVIKEYHK (83 aa). 61–65 provides a ligand contact to substrate; it reads GVGIY. Positions 116-353 constitute a Phosphagen kinase C-terminal domain; that stretch reads YIVSTRVRVG…EACLAKEKEL (238 aa). Residues 119–123 and His182 each bind ATP; that span reads STRVR. Position 222 (Glu222) interacts with substrate. Residue Arg226 participates in ATP binding. Cys269 is a substrate binding site. Residues 278–282 and 306–311 each bind ATP; these read RASVH and RGIHGE. Glu311 is a binding site for substrate.

The protein belongs to the ATP:guanido phosphotransferase family. As to quaternary structure, monomer.

The catalysed reaction is L-arginine + ATP = N(omega)-phospho-L-arginine + ADP + H(+). The sequence is that of Arginine kinase from Haliotis madaka (Giant abalone).